The primary structure comprises 461 residues: Calcitonin gene-related peptide type 1 receptor (461 aa).

The first 22 residues, methionine 1–alanine 22, serve as a signal peptide directing secretion. Residues glutamate 23–leucine 139 lie on the Extracellular side of the membrane. Intrachain disulfides connect cysteine 48-cysteine 74, cysteine 65-cysteine 105, and cysteine 88-cysteine 127. N-linked (GlcNAc...) asparagine glycans are attached at residues asparagine 66, asparagine 118, and asparagine 123. A helical transmembrane segment spans residues asparagine 140–phenylalanine 164. The Cytoplasmic segment spans residues tyrosine 165–threonine 175. A helical membrane pass occupies residues leucine 176–valine 198. The Extracellular segment spans residues alanine 199–proline 209. A helical membrane pass occupies residues valine 210–histidine 238. Residues threonine 239–leucine 252 lie on the Cytoplasmic side of the membrane. Residues methionine 253–alanine 273 traverse the membrane as a helical segment. Topologically, residues arginine 274 to histidine 289 are extracellular. Positions threonine 288–histidine 289 are required for RAMP3 interaction. The helical transmembrane segment at leucine 290–arginine 314 threads the bilayer. The Cytoplasmic portion of the chain corresponds to valine 315–asparagine 329. A helical membrane pass occupies residues leucine 330 to leucine 351. Residues isoleucine 352–aspartate 366 are Extracellular-facing. The helical transmembrane segment at tyrosine 367–phenylalanine 387 threads the bilayer. A phosphoserine mark is found at serine 420 and serine 445.

This sequence belongs to the G-protein coupled receptor 2 family. Heterodimer of CALCRL and RAMP1; the receptor complex functions as CGRP receptor. Heterodimer of CALCRL and RAMP2 or CALCRL and RAMP3; the complexes function as adrenomedullin receptor. In terms of tissue distribution, predominantly expressed in the lung and heart.

It is found in the cell membrane. Its function is as follows. G protein-coupled receptor which specificity is determined by its interaction with receptor-activity-modifying proteins (RAMPs). Together with RAMP1, form the receptor complex for calcitonin-gene-related peptides CALCA/CGRP1 and CALCB/CGRP2. Together with RAMP2 or RAMP3, function as receptor complexes for adrenomedullin (ADM and ADM2). Ligand binding causes a conformation change that triggers signaling via guanine nucleotide-binding proteins (G proteins) and modulates the activity of downstream effectors. Activates cAMP-dependent pathway. This Homo sapiens (Human) protein is Calcitonin gene-related peptide type 1 receptor.